We begin with the raw amino-acid sequence, 346 residues long: 3 beta-hydroxysteroid dehydrogenase/Delta 5--&gt;4-isomerase (346 aa).

Tyrosine 147 functions as the Proton acceptor in the catalytic mechanism. Lysine 151 contributes to the NAD(+) binding site.

This sequence belongs to the 3-beta-HSD family.

The enzyme catalyses a 3beta-hydroxy-Delta(5)-steroid + NAD(+) = a 3-oxo-Delta(5)-steroid + NADH + H(+). The catalysed reaction is a 3-oxo-Delta(5)-steroid = a 3-oxo-Delta(4)-steroid. The protein operates within lipid metabolism; steroid biosynthesis. Its function is as follows. Catalyzes the oxidative conversion of Delta(5)-ene-3-beta-hydroxy steroid, and the oxidative conversion of ketosteroids. The 3-beta-HSD enzymatic system plays a crucial role in the biosynthesis of all classes of hormonal steroids. During viral infection, steroid production contributes to virulence by inhibiting the host inflammatory response. This chain is 3 beta-hydroxysteroid dehydrogenase/Delta 5--&gt;4-isomerase (OPG174), found in Homo sapiens (Human).